Consider the following 675-residue polypeptide: Methionine--tRNA ligase (675 aa).

The 'HIGH' region signature appears at 15-25; that stretch reads PYANGSIHLGH. Zn(2+) contacts are provided by C146, C149, C159, and C162. The 'KMSKS' region signature appears at 332–336; the sequence is KMSKS. ATP is bound at residue K335. The 103-residue stretch at 573–675 folds into the tRNA-binding domain; the sequence is DFAKVDMRIA…SGAQPGMQVK (103 aa).

It belongs to the class-I aminoacyl-tRNA synthetase family. MetG type 1 subfamily. As to quaternary structure, homodimer. The cofactor is Zn(2+).

It is found in the cytoplasm. It carries out the reaction tRNA(Met) + L-methionine + ATP = L-methionyl-tRNA(Met) + AMP + diphosphate. Functionally, is required not only for elongation of protein synthesis but also for the initiation of all mRNA translation through initiator tRNA(fMet) aminoacylation. This is Methionine--tRNA ligase from Yersinia pseudotuberculosis serotype I (strain IP32953).